Reading from the N-terminus, the 230-residue chain is Androgen-dependent TFPI-regulating protein (230 aa).

Residues M1–K3 lie on the Cytoplasmic side of the membrane. A helical transmembrane segment spans residues T4 to I24. Residues S25–M46 lie on the Extracellular side of the membrane. A helical membrane pass occupies residues T47–L67. The Cytoplasmic segment spans residues K68–L85. The helical transmembrane segment at L86–F106 threads the bilayer. The Extracellular segment spans residues L107–D119. Residues T120 to A140 traverse the membrane as a helical segment. The Cytoplasmic segment spans residues E141 to T154. The helical transmembrane segment at G155–F175 threads the bilayer. Over E176–S189 the chain is Extracellular. The chain crosses the membrane as a helical span at residues L190–L210. Residues G211 to K230 lie on the Cytoplasmic side of the membrane.

Belongs to the AIG1 family. In terms of tissue distribution, expressed in cultured endothelial cells and in placenta.

The protein resides in the cell membrane. It catalyses the reaction 9-hexadecanoyloxy-octadecanoate + H2O = 9-hydroxy-octadecanoate + hexadecanoate + H(+). It carries out the reaction 12-hexadecanoyloxy-octadecanoate + H2O = 12-hydroxyoctadecanoate + hexadecanoate + H(+). The enzyme catalyses 9-(9Z-hexadecenoyloxy)-octadecanoate + H2O = (9Z)-hexadecenoate + 9-hydroxy-octadecanoate + H(+). The catalysed reaction is 12-(9Z-hexadecenoyloxy)-octadecanoate + H2O = 12-hydroxyoctadecanoate + (9Z)-hexadecenoate + H(+). It catalyses the reaction 13-(9Z-hexadecenoyloxy)-octadecanoate + H2O = 13-hydroxy-octadecanoate + (9Z)-hexadecenoate + H(+). It carries out the reaction 9-octadecanoyloxy-octadecanoate + H2O = 9-hydroxy-octadecanoate + octadecanoate + H(+). The enzyme catalyses 12-octadecanoyloxy-octadecanoate + H2O = 12-hydroxyoctadecanoate + octadecanoate + H(+). The catalysed reaction is 13-octadecanoyloxy-octadecanoate + H2O = 13-hydroxy-octadecanoate + octadecanoate + H(+). It catalyses the reaction 9-(9Z-octadecenoyloxy)-octadecanoate + H2O = 9-hydroxy-octadecanoate + (9Z)-octadecenoate + H(+). It carries out the reaction 12-(9Z-octadecenoyloxy)-octadecanoate + H2O = 12-hydroxyoctadecanoate + (9Z)-octadecenoate + H(+). The enzyme catalyses 13-(9Z-octadecenoyloxy)-octadecanoate + H2O = 13-hydroxy-octadecanoate + (9Z)-octadecenoate + H(+). The catalysed reaction is 5-(9Z-octadecenoyloxy)-octadecanoate + H2O = 5-hydroxy-octadecanoate + (9Z)-octadecenoate + H(+). With respect to regulation, inhibited by N-hydroxyhydantoin carbamate JJH260 and beta-lactone KC01. In terms of biological role, hydrolyzes bioactive fatty-acid esters of hydroxy-fatty acids (FAHFAs), but not other major classes of lipids. Show a preference for FAHFAs with branching distal from the carboxylate head group of the lipids. Regulates the expression and the cell-associated anticoagulant activity of the inhibitor TFPI in endothelial cells (in vitro). The polypeptide is Androgen-dependent TFPI-regulating protein (ADTRP) (Homo sapiens (Human)).